The sequence spans 256 residues: 1-(5-phosphoribosyl)-5-[(5-phosphoribosylamino)methylideneamino] imidazole-4-carboxamide isomerase (256 aa).

Asp-8 (proton acceptor) is an active-site residue. Residue Asp-129 is the Proton donor of the active site.

Belongs to the HisA/HisF family.

It localises to the cytoplasm. The enzyme catalyses 1-(5-phospho-beta-D-ribosyl)-5-[(5-phospho-beta-D-ribosylamino)methylideneamino]imidazole-4-carboxamide = 5-[(5-phospho-1-deoxy-D-ribulos-1-ylimino)methylamino]-1-(5-phospho-beta-D-ribosyl)imidazole-4-carboxamide. It functions in the pathway amino-acid biosynthesis; L-histidine biosynthesis; L-histidine from 5-phospho-alpha-D-ribose 1-diphosphate: step 4/9. The sequence is that of 1-(5-phosphoribosyl)-5-[(5-phosphoribosylamino)methylideneamino] imidazole-4-carboxamide isomerase from Prochlorococcus marinus (strain NATL1A).